Here is a 129-residue protein sequence, read N- to C-terminus: MTGALPDGADRRRAAYRFGHRAEWLALAALMLKGYWPIGRRVSVAGGEIDLVVRRWNTVVFVEVKARAKRDDAREAIDGAKRRRFSRAVRAWIGRNAWCAGATFRADAVFVGHWAWPAHVERVFTIEGL.

Belongs to the UPF0102 family.

This chain is UPF0102 protein Mrad2831_2938, found in Methylobacterium radiotolerans (strain ATCC 27329 / DSM 1819 / JCM 2831 / NBRC 15690 / NCIMB 10815 / 0-1).